A 208-amino-acid chain; its full sequence is PITH domain-containing protein ZK353.9 (208 aa).

One can recognise a PITH domain in the interval 17–189 (EVPGDDVYRY…RIAIATYESR (173 aa)).

The protein belongs to the PITHD1 family.

In Caenorhabditis elegans, this protein is PITH domain-containing protein ZK353.9.